Consider the following 380-residue polypeptide: DNA replication and repair protein RecF (380 aa).

30–37 (GENAQGKT) contributes to the ATP binding site.

The protein belongs to the RecF family.

The protein resides in the cytoplasm. The RecF protein is involved in DNA metabolism; it is required for DNA replication and normal SOS inducibility. RecF binds preferentially to single-stranded, linear DNA. It also seems to bind ATP. The chain is DNA replication and repair protein RecF from Synechococcus sp. (strain JA-3-3Ab) (Cyanobacteria bacterium Yellowstone A-Prime).